A 387-amino-acid polypeptide reads, in one-letter code: Zinc finger protein neuro-d4 (387 aa).

Residues Lys-106, Lys-129, and Lys-133 each participate in a glycyl lysine isopeptide (Lys-Gly) (interchain with G-Cter in SUMO2) cross-link. The segment at 195–218 adopts a C2H2-type zinc-finger fold; the sequence is YVCDICGKRYKNRPGLSYHYTHTH. 2 PHD-type zinc fingers span residues 271–328 and 325–375; these read NGYC…CKSC and CKSC…CLRH. Residues Cys-274, Cys-277, Cys-293, Cys-296, His-301, Cys-304, Cys-322, Cys-325, Cys-328, Cys-331, Cys-343, Cys-346, His-351, Cys-354, Cys-369, and Cys-372 each coordinate Zn(2+).

It belongs to the requiem/DPF family. Component of neuron-specific chromatin remodeling complex (nBAF complex) composed of at least, ARID1A/BAF250A or ARID1B/BAF250B, SMARCD1/BAF60A, SMARCD3/BAF60C, SMARCA2/BRM/BAF190B, SMARCA4/BRG1/BAF190A, SMARCB1/BAF47, SMARCC1/BAF155, SMARCE1/BAF57, SMARCC2/BAF170, DPF1/BAF45B, DPF3/BAF45C, ACTL6B/BAF53B and actin.

The protein resides in the cytoplasm. It localises to the nucleus. Functionally, may have an important role in developing neurons by participating in regulation of cell survival, possibly as a neurospecific transcription factor. Belongs to the neuron-specific chromatin remodeling complex (nBAF complex). During neural development a switch from a stem/progenitor to a postmitotic chromatin remodeling mechanism occurs as neurons exit the cell cycle and become committed to their adult state. The transition from proliferating neural stem/progenitor cells to postmitotic neurons requires a switch in subunit composition of the npBAF and nBAF complexes. As neural progenitors exit mitosis and differentiate into neurons, npBAF complexes which contain ACTL6A/BAF53A and PHF10/BAF45A, are exchanged for homologous alternative ACTL6B/BAF53B and DPF1/BAF45B or DPF3/BAF45C subunits in neuron-specific complexes (nBAF). The npBAF complex is essential for the self-renewal/proliferative capacity of the multipotent neural stem cells. The nBAF complex along with CREST plays a role regulating the activity of genes essential for dendrite growth. In Homo sapiens (Human), this protein is Zinc finger protein neuro-d4.